The primary structure comprises 715 residues: uncharacterized protein (715 aa).

4 disordered regions span residues 192–216 (ASSV…SVTA), 300–348 (NEEV…TSKR), 461–481 (ASSS…RSNE), and 580–630 (FTVS…KPPK). Residues 202 to 213 (NNTSPYPPSNSS) show a composition bias toward low complexity. Composition is skewed to polar residues over residues 301–326 (EEVS…NKND) and 472–481 (HLGTSLRSNE). Low complexity predominate over residues 601–614 (TDSSPSDTISSSPT).

This is an uncharacterized protein from Schizosaccharomyces pombe (strain 972 / ATCC 24843) (Fission yeast).